The following is a 663-amino-acid chain: UvrABC system protein B (663 aa).

Over residues 1–10 (MIDKRDDKPF) the composition is skewed to basic and acidic residues. Positions 1–23 (MIDKRDDKPFKLKSKYKPSGDQP) are disordered. The Helicase ATP-binding domain maps to 31–418 (DNIEGGEKAQ…TNTIIEQIIR (388 aa)). 44 to 51 (GATGTGKT) is a binding site for ATP. The short motif at 97–120 (YYDYYQPEAYVPSSDTYIEKDSSV) is the Beta-hairpin element. A Helicase C-terminal domain is found at 435 to 601 (QMDDLLGEIN…TIKKDIRGLI (167 aa)). The UVR domain maps to 627–662 (KEAINALQKQMQEAAELLDFELAAQMRDLILELKLM).

This sequence belongs to the UvrB family. As to quaternary structure, forms a heterotetramer with UvrA during the search for lesions. Interacts with UvrC in an incision complex.

Its subcellular location is the cytoplasm. Its function is as follows. The UvrABC repair system catalyzes the recognition and processing of DNA lesions. A damage recognition complex composed of 2 UvrA and 2 UvrB subunits scans DNA for abnormalities. Upon binding of the UvrA(2)B(2) complex to a putative damaged site, the DNA wraps around one UvrB monomer. DNA wrap is dependent on ATP binding by UvrB and probably causes local melting of the DNA helix, facilitating insertion of UvrB beta-hairpin between the DNA strands. Then UvrB probes one DNA strand for the presence of a lesion. If a lesion is found the UvrA subunits dissociate and the UvrB-DNA preincision complex is formed. This complex is subsequently bound by UvrC and the second UvrB is released. If no lesion is found, the DNA wraps around the other UvrB subunit that will check the other stand for damage. The sequence is that of UvrABC system protein B from Streptococcus pyogenes serotype M28 (strain MGAS6180).